A 177-amino-acid chain; its full sequence is Nucleoside triphosphate/diphosphate phosphatase (177 aa).

Catalysis depends on arginine 23, which acts as the Proton donor. Residues asparagine 87, aspartate 103, aspartate 105, aspartate 107, aspartate 120, and glutamate 123 each coordinate Mg(2+).

Belongs to the Ntdp family. The cofactor is Mg(2+).

The enzyme catalyses a ribonucleoside 5'-triphosphate + H2O = a ribonucleoside 5'-diphosphate + phosphate + H(+). It catalyses the reaction a ribonucleoside 5'-diphosphate + H2O = a ribonucleoside 5'-phosphate + phosphate + H(+). Its function is as follows. Has nucleoside phosphatase activity towards nucleoside triphosphates and nucleoside diphosphates. This is Nucleoside triphosphate/diphosphate phosphatase from Streptococcus pyogenes serotype M3 (strain ATCC BAA-595 / MGAS315).